Reading from the N-terminus, the 315-residue chain is Protein MFI (315 aa).

Can homodimerize. Interacts with MFF; the interaction inhibits MFF interaction with DNM1L. In terms of tissue distribution, enriched in the pancreatic beta cell and the testis and is expressed at low levels in other tissues tested.

Its subcellular location is the cytoplasm. It localises to the cytosol. The protein resides in the mitochondrion outer membrane. Acts as an inhibitor of mitochondrial fission. Interacts with MFF and prevents DNM1L recruitment to mitochondria, promoting a more fused mitochondrial network. This chain is Protein MFI, found in Mus musculus (Mouse).